A 100-amino-acid polypeptide reads, in one-letter code: Proline-rich protein 15-like protein (100 aa).

The tract at residues 29-51 (YAQTEGGAEPPGPDAGDPHSDFN) is disordered.

The protein belongs to the PRR15 family.

This chain is Proline-rich protein 15-like protein (Prr15l), found in Mus musculus (Mouse).